The sequence spans 410 residues: Dipeptidase 1 (410 aa).

An N-terminal signal peptide occupies residues 1 to 16; that stretch reads MWTGWWLWPLVAVCTA. The Zn(2+) site is built by histidine 36 and aspartate 38. Residues asparagine 57 and asparagine 62 are each glycosylated (N-linked (GlcNAc...) asparagine). A disulfide bridge connects residues cysteine 87 and cysteine 170. Zn(2+) is bound at residue glutamate 141. Histidine 168 provides a ligand contact to substrate. 2 residues coordinate Zn(2+): histidine 214 and histidine 235. The cysteines at positions 242 and 274 are disulfide-linked. Arginine 246 lines the substrate pocket. N-linked (GlcNAc...) asparagine glycosylation occurs at asparagine 279. Position 304 (aspartate 304) interacts with substrate. Serine 384 carries the GPI-anchor amidated serine lipid modification. A propeptide spans 385-410 (removed in mature form); that stretch reads GAPSLHLQPGTLLASLVTLLLSLCLL.

This sequence belongs to the metallo-dependent hydrolases superfamily. Peptidase M19 family. In terms of assembly, homodimer; disulfide-linked. It depends on Zn(2+) as a cofactor.

It localises to the apical cell membrane. It carries out the reaction an L-aminoacyl-L-amino acid + H2O = 2 an L-alpha-amino acid. The catalysed reaction is leukotriene D4 + H2O = leukotriene E4 + glycine. The enzyme catalyses L-cystine-bis-glycine + 2 H2O = L-cystine + 2 glycine. It catalyses the reaction a beta-lactam + H2O = a substituted beta-amino acid. It carries out the reaction glycyldehydrophenylalanine + H2O = 2,3-didehydrophenylalanine + glycine. Its activity is regulated as follows. Inhibited by L-penicillamine. Inhibited by cilastatin. In terms of biological role, hydrolyzes a wide range of dipeptides including the conversion of leukotriene D4 to leukotriene E4. Hydrolyzes cystinyl-bis-glycine (cys-bis-gly) formed during glutathione degradation. Also possesses beta lactamase activity and hydrolytically inactivates beta-lactam antibiotics. Independently of its dipeptidase activity, acts as an adhesion receptor for neutrophil recruitment from bloodstream into inflamed lungs and liver. The chain is Dipeptidase 1 (DPEP1) from Bos taurus (Bovine).